Reading from the N-terminus, the 173-residue chain is Co-chaperone protein HscB homolog (173 aa).

One can recognise a J domain in the interval 3–75; it reads NPFSLFNLPV…IARATAIIEI (73 aa).

This sequence belongs to the HscB family. Interacts with HscA and stimulates its ATPase activity.

In terms of biological role, co-chaperone involved in the maturation of iron-sulfur cluster-containing proteins. Seems to help targeting proteins to be folded toward HscA. This is Co-chaperone protein HscB homolog from Haemophilus ducreyi (strain 35000HP / ATCC 700724).